The chain runs to 102 residues: UPF0235 protein msl4154 (102 aa).

It belongs to the UPF0235 family.

The polypeptide is UPF0235 protein msl4154 (Mesorhizobium japonicum (strain LMG 29417 / CECT 9101 / MAFF 303099) (Mesorhizobium loti (strain MAFF 303099))).